The chain runs to 818 residues: Glycogen phosphorylase (818 aa).

Lysine 667 bears the N6-(pyridoxal phosphate)lysine mark.

This sequence belongs to the glycogen phosphorylase family. Pyridoxal 5'-phosphate is required as a cofactor.

It catalyses the reaction [(1-&gt;4)-alpha-D-glucosyl](n) + phosphate = [(1-&gt;4)-alpha-D-glucosyl](n-1) + alpha-D-glucose 1-phosphate. Phosphorylase is an important allosteric enzyme in carbohydrate metabolism. Enzymes from different sources differ in their regulatory mechanisms and in their natural substrates. However, all known phosphorylases share catalytic and structural properties. In Pasteurella multocida (strain Pm70), this protein is Glycogen phosphorylase (glgP).